The following is a 335-amino-acid chain: Probable peroxidase 26 (335 aa).

Residues 1–18 (MVMIHIFLTVMVVGGVSL) form the signal peptide. 4 disulfide bridges follow: Cys46–Cys122, Cys79–Cys84, Cys128–Cys331, and Cys205–Cys237. Arg73 is a catalytic residue. Ca(2+) is bound by residues Asp78, Val81, Gly83, Asp85, and Ser87. Substrate is bound at residue Pro168. Heme b is bound at residue His198. Residue Ser199 participates in Ca(2+) binding. Residue Asn216 is glycosylated (N-linked (GlcNAc...) asparagine). The Ca(2+) site is built by Asp255 and Ser258. N-linked (GlcNAc...) asparagine glycosylation is found at Asn259 and Asn273.

This sequence belongs to the peroxidase family. Classical plant (class III) peroxidase subfamily. Heme b is required as a cofactor. Ca(2+) serves as cofactor.

It localises to the secreted. It catalyses the reaction 2 a phenolic donor + H2O2 = 2 a phenolic radical donor + 2 H2O. Removal of H(2)O(2), oxidation of toxic reductants, biosynthesis and degradation of lignin, suberization, auxin catabolism, response to environmental stresses such as wounding, pathogen attack and oxidative stress. The enzyme activity has to be proved. In Arabidopsis thaliana (Mouse-ear cress), this protein is Probable peroxidase 26 (PER26).